The sequence spans 376 residues: Peroxisomal membrane protein PEX27 (376 aa).

Homooligomer. Interacts with PEX25 and PEX34.

The protein localises to the peroxisome membrane. In terms of biological role, required for regulation of peroxisome size and number. Also promotes peroxisome division and biogenesis. This is Peroxisomal membrane protein PEX27 (PEX27) from Saccharomyces cerevisiae (strain ATCC 204508 / S288c) (Baker's yeast).